Here is a 236-residue protein sequence, read N- to C-terminus: 2,3,4,5-tetrahydropyridine-2,6-dicarboxylate N-acetyltransferase (236 aa).

Belongs to the transferase hexapeptide repeat family. DapH subfamily.

The enzyme catalyses (S)-2,3,4,5-tetrahydrodipicolinate + acetyl-CoA + H2O = L-2-acetamido-6-oxoheptanedioate + CoA. The protein operates within amino-acid biosynthesis; L-lysine biosynthesis via DAP pathway; LL-2,6-diaminopimelate from (S)-tetrahydrodipicolinate (acetylase route): step 1/3. Functionally, catalyzes the transfer of an acetyl group from acetyl-CoA to tetrahydrodipicolinate. This is 2,3,4,5-tetrahydropyridine-2,6-dicarboxylate N-acetyltransferase from Clostridium botulinum (strain Alaska E43 / Type E3).